Reading from the N-terminus, the 310-residue chain is Probable deoxyhypusine synthase (310 aa).

The Nucleophile role is filled by K284.

It belongs to the deoxyhypusine synthase family. NAD(+) serves as cofactor.

The catalysed reaction is [eIF5A protein]-L-lysine + spermidine = [eIF5A protein]-deoxyhypusine + propane-1,3-diamine. It functions in the pathway protein modification; eIF5A hypusination. Catalyzes the NAD-dependent oxidative cleavage of spermidine and the subsequent transfer of the butylamine moiety of spermidine to the epsilon-amino group of a specific lysine residue of the eIF-5A precursor protein to form the intermediate deoxyhypusine residue. This chain is Probable deoxyhypusine synthase (dys), found in Thermoplasma volcanium (strain ATCC 51530 / DSM 4299 / JCM 9571 / NBRC 15438 / GSS1).